We begin with the raw amino-acid sequence, 1208 residues long: Spindle pole body protein pcp1 (1208 aa).

The span at 1 to 17 (MSERDFNTQSPKFKDEN) shows a compositional bias: basic and acidic residues. Residues 1 to 91 (MSERDFNTQS…DKYNGSLGDK (91 aa)) are disordered. Over residues 48 to 64 (NDKSSFQTPLRNGSYQP) the composition is skewed to polar residues. Coiled-coil stretches lie at residues 151 to 375 (LREQ…KENQ), 387 to 803 (TDSM…ANIE), 874 to 1091 (GTET…QSTQ), and 1177 to 1204 (ERMK…AKAK). Serine 906 bears the Phosphoserine mark.

As to quaternary structure, interacts with ccq1.

It localises to the nucleus. It is found in the cytoplasm. Its subcellular location is the cytoskeleton. The protein resides in the microtubule organizing center. The protein localises to the spindle pole body. Functionally, spindle pole body component that binds calmodulin. Overexpression of pcp1 causes the formation of supernumerary SPB-like structures and disrupts both mitotic spindle assembly and chromosome segregation. The polypeptide is Spindle pole body protein pcp1 (pcp1) (Schizosaccharomyces pombe (strain 972 / ATCC 24843) (Fission yeast)).